The chain runs to 862 residues: ATP-dependent helicase Lhr-Core (862 aa).

ATP is bound by residues Gln37, Lys60, Thr61, Asp178, Glu179, Val360, Arg377, and His380. Residues 41-233 (IMDIHRGRNV…FLVGYSYGSE (193 aa)) form the Helicase ATP-binding domain. The DEAH box motif lies at 178-181 (DEIH). In terms of domain architecture, Helicase C-terminal spans 269-424 (ALYDILHDLI…SIKVPENCLD (156 aa)). A WH domain region spans residues 425-513 (VLAQHIYGMA…LYSTNIGTIP (89 aa)). Residues 514–862 (DRSAAVVKCG…HQAIIDEIKR (349 aa)) form a domain 4 region.

This sequence belongs to the Lhr helicase family. Lhr-Core subfamily. As to quaternary structure, monomer.

It carries out the reaction Couples ATP hydrolysis with the unwinding of duplex DNA by translocating in the 3'-5' direction.. The catalysed reaction is ATP + H2O = ADP + phosphate + H(+). Functionally, DNA helicase that translocates in a 3'-5' direction on single-stranded (ss)DNA, probably involved in DNA repair. Most active on three- or four-stranded forked DNA; flayed structures and Holliday junction (HJ) substrates are unwound slightly less well. Also unwinds 3'-tailed duplexes; both RNA:DNA hybrids and double-stranded (ds)DNA with a 3'-single strand (ss)DNA loading strand are unwound. Substrates where the helicase loads on a 3'-ssRNA tail (DNA:RNA and RNA:RNA) were not tested. Blunt-ended dsDNA is not a substrate. Probably involved in replication-coupled DNA repair; remodeling of fork DNA after binding by Lhr generates ssDNA for ATP-dependent DNA translocation. This is ATP-dependent helicase Lhr-Core from Methanothermobacter thermautotrophicus (strain ATCC 29096 / DSM 1053 / JCM 10044 / NBRC 100330 / Delta H) (Methanobacterium thermoautotrophicum).